Consider the following 451-residue polypeptide: Vacuolar cation/proton exchanger 1a (451 aa).

Over 1-58 (MEAAAAMEAGRKLAARHPHGRSRTAHNMSSSSLRKKSDAALVRKVPVAPLRPLLANLQ) the chain is Cytoplasmic. The segment at 9–37 (AGRKLAARHPHGRSRTAHNMSSSSLRKKS) is disordered. Basic residues predominate over residues 13 to 24 (LAARHPHGRSRT). Residues 59–79 (EVFLATKLAVLFPAVPLAIAA) form a helical membrane-spanning segment. The Vacuolar segment spans residues 80 to 86 (QCFRFDQ). A helical transmembrane segment spans residues 87–107 (VWVFALSLLGLIPLAERVSFL). The Cytoplasmic portion of the chain corresponds to 108 to 120 (TEQIALYTGPTVG). A helical membrane pass occupies residues 121–141 (GLLNATCGNATELIIALFALL). Residues 128–163 (GNATELIIALFALLKGKIEVVKCSLLGSVLSNLLLV) are cation selection. Topologically, residues 142-153 (KGKIEVVKCSLL) are vacuolar. Residues 154–174 (GSVLSNLLLVLGTSLFCGGVV) traverse the membrane as a helical segment. At 175–191 (NLGARQPYDRNQSDVST) the chain is on the cytoplasmic side. Residues 192-212 (ALLFLAVLCHSAPLLLRYAVA) traverse the membrane as a helical segment. Topologically, residues 213-228 (AGEHSVSATSAAASLD) are vacuolar. Residues 229 to 249 (LSRACSFVMLASYVAYLFFQL) form a helical membrane-spanning segment. At 250–273 (KTHRQLFEPQEVDGGDAGDDDEEP) the chain is on the cytoplasmic side. Residues 274 to 294 (ALGFASALFWLALMTAVISVL) traverse the membrane as a helical segment. Residues 295–317 (SEYVVGTIEPTSQSWGLSVSFIS) lie on the Vacuolar side of the membrane. Residues 318–338 (IILLPIVGNAAEHAGAIIFAL) traverse the membrane as a helical segment. Positions 325–360 (GNAAEHAGAIIFALKNKLDITLGVALGSATQISMFV) are cation selection. Residues 339-352 (KNKLDITLGVALGS) lie on the Cytoplasmic side of the membrane. Residues 353-373 (ATQISMFVVPLSVLVAWIMGV) traverse the membrane as a helical segment. At 374–378 (QMDLD) the chain is on the vacuolar side. The helical transmembrane segment at 379-399 (FKLLETGSLFMAVLVTAFTLQ) threads the bilayer. At 400-404 (DGTSH) the chain is on the cytoplasmic side. A helical membrane pass occupies residues 405 to 425 (YLKGILLLLCYIVIGACFFVA). The Vacuolar segment spans residues 426–451 (RQPAGHANSNGALLDVPTGSMSVQAA).

It belongs to the Ca(2+):cation antiporter (CaCA) (TC 2.A.19) family. Cation/proton exchanger (CAX) subfamily. Ubiquitous.

It localises to the vacuole membrane. Vacuolar cation/proton exchanger (CAX). Translocates Ca(2+) and other metal ions into vacuoles using the proton gradient formed by H(+)-ATPase and H(+)-pyrophosphatase. The sequence is that of Vacuolar cation/proton exchanger 1a (CAX1a) from Oryza sativa subsp. japonica (Rice).